A 567-amino-acid polypeptide reads, in one-letter code: Pyruvate decarboxylase (567 aa).

Positions 28 and 117 each coordinate pyruvate. Residues threonine 393 and 416–418 contribute to the thiamine diphosphate site; that span reads GSI. Position 447 (aspartate 447) interacts with Mg(2+). Residues 448–449 and 475–480 contribute to the thiamine diphosphate site; these read GS and NDGYTI. Mg(2+) is bound by residues asparagine 475 and glycine 477. Residue glutamate 481 participates in pyruvate binding.

The protein belongs to the TPP enzyme family. Homotetramer. Mg(2+) is required as a cofactor. It depends on thiamine diphosphate as a cofactor.

The protein resides in the cytoplasm. It carries out the reaction a 2-oxocarboxylate + H(+) = an aldehyde + CO2. The enzyme catalyses pyruvate + H(+) = acetaldehyde + CO2. This is Pyruvate decarboxylase (PDC11) from Candida albicans (strain SC5314 / ATCC MYA-2876) (Yeast).